Here is a 329-residue protein sequence, read N- to C-terminus: UDP-N-acetylenolpyruvoylglucosamine reductase (329 aa).

An FAD-binding PCMH-type domain is found at 28 to 192 (RVGGPADLLC…ARVEVRLHPG (165 aa)). Residue arginine 172 is part of the active site. Residue serine 221 is the Proton donor of the active site. The active site involves glutamate 291. The tract at residues 307–329 (DGHAAAGGGPGAASGGVRPPEAT) is disordered. Over residues 311–320 (AAGGGPGAAS) the composition is skewed to gly residues.

It belongs to the MurB family. The cofactor is FAD.

It is found in the cytoplasm. The enzyme catalyses UDP-N-acetyl-alpha-D-muramate + NADP(+) = UDP-N-acetyl-3-O-(1-carboxyvinyl)-alpha-D-glucosamine + NADPH + H(+). The protein operates within cell wall biogenesis; peptidoglycan biosynthesis. Functionally, cell wall formation. This Anaeromyxobacter dehalogenans (strain 2CP-1 / ATCC BAA-258) protein is UDP-N-acetylenolpyruvoylglucosamine reductase.